A 214-amino-acid polypeptide reads, in one-letter code: NADH-ubiquinone oxidoreductase chain 5 (214 aa).

The next 4 membrane-spanning stretches (helical) occupy residues 14 to 34 (LNTW…TYSI), 58 to 78 (PLIT…GMII), 92 to 112 (MPLI…ILAL), and 192 to 212 (TGLI…MILM).

This sequence belongs to the complex I subunit 5 family.

Its subcellular location is the mitochondrion inner membrane. The enzyme catalyses a ubiquinone + NADH + 5 H(+)(in) = a ubiquinol + NAD(+) + 4 H(+)(out). Functionally, core subunit of the mitochondrial membrane respiratory chain NADH dehydrogenase (Complex I) that is believed to belong to the minimal assembly required for catalysis. Complex I functions in the transfer of electrons from NADH to the respiratory chain. The immediate electron acceptor for the enzyme is believed to be ubiquinone. This Anser caerulescens (Snow goose) protein is NADH-ubiquinone oxidoreductase chain 5 (MT-ND5).